The following is a 607-amino-acid chain: DNA mismatch repair protein MutL (607 aa).

It belongs to the DNA mismatch repair MutL/HexB family.

Functionally, this protein is involved in the repair of mismatches in DNA. It is required for dam-dependent methyl-directed DNA mismatch repair. May act as a 'molecular matchmaker', a protein that promotes the formation of a stable complex between two or more DNA-binding proteins in an ATP-dependent manner without itself being part of a final effector complex. The sequence is that of DNA mismatch repair protein MutL from Gemmatimonas aurantiaca (strain DSM 14586 / JCM 11422 / NBRC 100505 / T-27).